Consider the following 2263-residue polypeptide: MMLLILFLVIICSHISVNQDSGPEYADVVFLVDSSDRLGSKSFPFVKMFITKMISSLPIEADKYRVALAQYSDKLHSEFHLSTFKGRSPMLNHLRKNFGFIGGSLQIGKALQEAHRTYFSAPANGRDKKQFPPILVVLASSESEDNVEEASKALRKDGVKIISVGVQKASEENLKAMATSQFHFNLRTVRDLSMFSQNMTHIIKDVIKYKEGAVDDIFVEACQGPSMADVVFLLDMSINGSEENFDYLKGFLEESVSALDIKENCMRVGLVAYSNETKVINSLSMGINKSEVLQHIQNLSPRTGKAYTGAAIKKLRKEVFSARNGSRKNQGVPQIAVLVTHRDSEDNVTKAAVNLRREGVTIFTLGIEGASDTQLEKIASHPAEQYVSKLKTFADLAAHNQTFLKKLRNQITHTVSVFSERTETLKSGCVDTEEADIYLLIDGSGSTQATDFHEMKTFLSEVVGMFNIAPHKVRVGAVQYADSWDLEFEINKYSNKQDLGKAIENIRQMGGNTNTGAALNFTLSLLQKAKKQRGNKVPCHLVVLTNGMSKDSILEPANRLREEHIRVYAIGIKEANQTQLREIAGEEKRVYYVHDFDALKDIRNQVVQEICTEEACKEMKADIMFLVDSSGSIGPENFSKMKTFMKNLVSKSQIGPDRVQIGVVQFSDINKEEFQLNRFMSQSDISNAIDQMAHIGQTTLTGSALSFVSQYFSPTKGARPNIRKFLILITDGEAQDIVKEPAVVLRQEGVIIYSVGVFGSNVTQLEEISGRPEMVFYVENFDILQRIEDDLVFGICSPREECKRIEVLDVVFVIDSSGSIDYDEYNIMKDFMIGLVKKADVGKNQVRFGALKYADDPEVLFYLDDFGTKLEVISVLQNDQAMGGSTYTAEALGFSDHMFTEARGSRLNKGVPQVLIVITDGESHDADKLNATAKALRDKGILVLAVGIDGANPVELLAMAGSSDKYFFVETFGGLKGIFSDVTASVCNSSKVDCEIDKVDLVFLMDGSTSIQPNDFKKMKEFLASVVQDFDVSLNRVRIGAAQFSDTYHPEFPLGTFIGEKEISFQIENIKQIFGNTHIGAALREVEHYFRPDMGSRINTGTPQVLLVLTDGQSQDEVAQAAEALRHRGIDIYSVGIGDVDDQQLIQITGTAEKKLTVHNFDELKKVNKRIVRNICTTAGESNCFVDVVVGFDVSTQEKGQTLLEGQPWMETYLQDILRAISSLNGVSCEVGTETQVSVAFQVTNAMEKYSPKFEIYSENILNSLKDITVKGPSLLNANLLDSLWDTFQNKSAARGKVVLLFSDGLDDDVEKLEQKSDELRKEGLNALITVALDGPADSSDLADLPYIEFGKGFEYRTQLSIGMRELGSRLSKQLVNVAERTCCCLFCKCIGGDGTMGDPGPPGKRGPPGFKGSEGYLGEEGIAGERGAPGPVGEQGTKGCYGTKGPKGNRGLNGQEGEVGENGIDGLNGEQGDNGLPGRKGEKGDEGSQGSPGKRGTPGDRGAKGLRGDPGAPGVDSSIEGPTGLKGERGRQGRRGWPGPPGTPGSRRKTAAHGRRGHTGPQGTAGIPGPDGLEGSLGLKGPQGPRGEAGVKGEKGGVGSKGPQGPPGPGGEAGNQGRLGSQGNKGEPGDLGEKGAVGFPGPRGLQGNDGSPGYGSVGRKGAKGQEGFPGESGPKGEIGDPGGPGETGLKGARGKMISAGLPGEMGSPGEPGPPGRKGVKGAKGLASFSTCELIQYVRDRSPGRHGKPECPVHPTELVFALDHSRDVTEQEFERMKEMMAFLVRDIKVRENSCPVGAHIAILSYNSHARHLVRFSDAYKKSQLLREIETIPYERSSASREIGRAMRFISRNVFKRTLPGAHTRKIATFFSSGQSADAHSITTAAMEFGALEIIPVVITFSNVPSVRRAFAIDDTGTFQVIVVPSGADYIPALERLQRCTFCYDVCKPDASCDQARPPPVQSYMDAAFLLDASRNMGSAEFEDIRAFLGALLDHFEITPEPETSVTGDRVALLSHAPPDFLPNTQKSPVRAEFNLTTYRSKRLMKRHVHESVKQLNGDAFIGHALQWTLDNVFLSTPNLRRNKVIFVISAGETSHLDGEILKKESLRAKCQGYALFVFSLGPIWDDKELEDLASHPLDHHLVQLGRIHKPDHSYGVKFVKSFINSIRRAINKYPPINLKIKCNRLNSIDPKQPPRPFRSFVPGPLKATLKEDVLQKAKFFQDKKYLSRVARSGRDDAIQNFMRSTSHTFKNGRMIESAPKQHD.

Positions Met1–Gln19 are cleaved as a signal peptide. Residues Asp20 to Ile1391 form a nonhelical region region. VWFA domains lie at Asp27–Val206, Asp229–Ile411, Asp436–Val606, Asp622–Leu791, and Asp809–Val982. N-linked (GlcNAc...) asparagine glycans are attached at residues Asn198, Asn275, Asn288, Asn347, and Asn520. Residues Asn930 and Asn988 are each glycosylated (N-linked (GlcNAc...) asparagine). 2 VWFA domains span residues Asp1000–Ile1171 and Asp1187–Leu1371. Asn1290 is a glycosylation site (N-linked (GlcNAc...) asparagine). The interval Gly1392–Gly1725 is triple-helical region. Residues Met1397–Ala1723 are disordered. Residues Thr1498 to Arg1508 are compositionally biased toward basic and acidic residues. Positions Arg1508–Asp1510 match the Cell attachment site motif. Residues Ser1547–His1559 show a composition bias toward basic residues. The segment covering Gly1680–Gly1689 has biased composition (gly residues). The segment at Leu1726 to Asp2263 is nonhelical region. 2 VWFA domains span residues Glu1757 to Gln1937 and Asp1965 to Ile2166.

This sequence belongs to the type VI collagen family. Trimers composed of three different chains: alpha-1(VI), alpha-2(VI), and alpha-3(VI) or alpha-5(VI) or alpha-6(VI). Post-translationally, prolines at the third position of the tripeptide repeating unit (G-X-Y) are hydroxylated in some or all of the chains.

The protein localises to the secreted. It localises to the extracellular space. The protein resides in the extracellular matrix. Its function is as follows. Collagen VI acts as a cell-binding protein. The protein is Collagen alpha-6(VI) chain (COL6A6) of Homo sapiens (Human).